The primary structure comprises 213 residues: ATP synthase peripheral stalk subunit OSCP, mitochondrial (213 aa).

The transit peptide at 1-23 (MASQAVSGLSRQVRCFSTSVVRP) directs the protein to the mitochondrion. Positions 5–23 (AVSGLSRQVRCFSTSVVRP) match the SIFI-degron motif. Residues Lys-54, Lys-60, Lys-70, and Lys-73 each carry the N6-acetyllysine modification. Position 90 is an N6-succinyllysine (Lys-90). N6-acetyllysine; alternate is present on residues Lys-100, Lys-158, and Lys-162. N6-succinyllysine; alternate occurs at positions 100, 158, and 162. Lys-172, Lys-176, and Lys-192 each carry N6-acetyllysine. Lys-199 is subject to N6-succinyllysine.

This sequence belongs to the ATPase delta chain family. In terms of assembly, component of the ATP synthase complex composed at least of ATP5F1A/subunit alpha, ATP5F1B/subunit beta, ATP5MC1/subunit c (homooctomer), MT-ATP6/subunit a, MT-ATP8/subunit 8, ATP5ME/subunit e, ATP5MF/subunit f, ATP5MG/subunit g, ATP5MK/subunit k, ATP5MJ/subunit j, ATP5F1C/subunit gamma, ATP5F1D/subunit delta, ATP5F1E/subunit epsilon, ATP5PF/subunit F6, ATP5PB/subunit b, ATP5PD/subunit d, ATP5PO/subunit OSCP. ATP synthase complex consists of a soluble F(1) head domain (subunits alpha(3) and beta(3)) - the catalytic core - and a membrane F(0) domain - the membrane proton channel (subunits c, a, 8, e, f, g, k and j). These two domains are linked by a central stalk (subunits gamma, delta, and epsilon) rotating inside the F1 region and a stationary peripheral stalk (subunits F6, b, d, and OSCP). In terms of processing, acetylation at Lys-162 decreases ATP production. Deacetylated by SIRT3. Post-translationally, in response to mitochondrial stress, the precursor protein is ubiquitinated by the SIFI complex in the cytoplasm before mitochondrial import, leading to its degradation. Within the SIFI complex, UBR4 initiates ubiquitin chain that are further elongated or branched by KCMF1.

It is found in the mitochondrion. It localises to the mitochondrion inner membrane. Its function is as follows. Subunit OSCP, of the mitochondrial membrane ATP synthase complex (F(1)F(0) ATP synthase or Complex V) that produces ATP from ADP in the presence of a proton gradient across the membrane which is generated by electron transport complexes of the respiratory chain. ATP synthase complex consist of a soluble F(1) head domain - the catalytic core - and a membrane F(1) domain - the membrane proton channel. These two domains are linked by a central stalk rotating inside the F(1) region and a stationary peripheral stalk. During catalysis, ATP synthesis in the catalytic domain of F(1) is coupled via a rotary mechanism of the central stalk subunits to proton translocation. In vivo, can only synthesize ATP although its ATP hydrolase activity can be activated artificially in vitro. Part of the complex F(0) domain. Part of the complex F(0) domain and the peripheric stalk, which acts as a stator to hold the catalytic alpha(3)beta(3) subcomplex and subunit a/ATP6 static relative to the rotary elements. In Sus scrofa (Pig), this protein is ATP synthase peripheral stalk subunit OSCP, mitochondrial.